We begin with the raw amino-acid sequence, 1222 residues long: ATP-dependent helicase/nuclease subunit A (1222 aa).

The UvrD-like helicase ATP-binding domain maps to 27-483 (HLQENERCRD…RDYQKKPEQG (457 aa)). 48 to 55 (AIYTSGQN) serves as a coordination point for ATP. The region spanning 512-798 (ESVGDVLYDE…ADVEVATPKQ (287 aa)) is the UvrD-like helicase C-terminal domain.

Belongs to the helicase family. AddA subfamily. Heterodimer of AddA and AddB/RexB. It depends on Mg(2+) as a cofactor.

It catalyses the reaction Couples ATP hydrolysis with the unwinding of duplex DNA by translocating in the 3'-5' direction.. The catalysed reaction is ATP + H2O = ADP + phosphate + H(+). The heterodimer acts as both an ATP-dependent DNA helicase and an ATP-dependent, dual-direction single-stranded exonuclease. Recognizes the chi site generating a DNA molecule suitable for the initiation of homologous recombination. The AddA nuclease domain is required for chi fragment generation; this subunit has the helicase and 3' -&gt; 5' nuclease activities. The protein is ATP-dependent helicase/nuclease subunit A of Streptococcus pyogenes serotype M1.